The chain runs to 464 residues: Siroheme synthase (464 aa).

The segment at methionine 1 to leucine 203 is precorrin-2 dehydrogenase /sirohydrochlorin ferrochelatase. Residues glutamate 22–isoleucine 23 and proline 43–glutamate 44 contribute to the NAD(+) site. A Phosphoserine modification is found at serine 128. Residues glycine 216–leucine 464 form a uroporphyrinogen-III C-methyltransferase region. Proline 225 lines the S-adenosyl-L-methionine pocket. Residue aspartate 248 is the Proton acceptor of the active site. The Proton donor role is filled by lysine 270. S-adenosyl-L-methionine contacts are provided by residues glycine 301 to aspartate 303, isoleucine 306, threonine 331 to alanine 332, methionine 383, and glycine 412.

This sequence in the N-terminal section; belongs to the precorrin-2 dehydrogenase / sirohydrochlorin ferrochelatase family. The protein in the C-terminal section; belongs to the precorrin methyltransferase family.

The enzyme catalyses uroporphyrinogen III + 2 S-adenosyl-L-methionine = precorrin-2 + 2 S-adenosyl-L-homocysteine + H(+). It catalyses the reaction precorrin-2 + NAD(+) = sirohydrochlorin + NADH + 2 H(+). It carries out the reaction siroheme + 2 H(+) = sirohydrochlorin + Fe(2+). It functions in the pathway cofactor biosynthesis; adenosylcobalamin biosynthesis; precorrin-2 from uroporphyrinogen III: step 1/1. It participates in cofactor biosynthesis; adenosylcobalamin biosynthesis; sirohydrochlorin from precorrin-2: step 1/1. Its pathway is porphyrin-containing compound metabolism; siroheme biosynthesis; precorrin-2 from uroporphyrinogen III: step 1/1. The protein operates within porphyrin-containing compound metabolism; siroheme biosynthesis; siroheme from sirohydrochlorin: step 1/1. It functions in the pathway porphyrin-containing compound metabolism; siroheme biosynthesis; sirohydrochlorin from precorrin-2: step 1/1. Its function is as follows. Multifunctional enzyme that catalyzes the SAM-dependent methylations of uroporphyrinogen III at position C-2 and C-7 to form precorrin-2 via precorrin-1. Then it catalyzes the NAD-dependent ring dehydrogenation of precorrin-2 to yield sirohydrochlorin. Finally, it catalyzes the ferrochelation of sirohydrochlorin to yield siroheme. This Pseudomonas syringae pv. tomato (strain ATCC BAA-871 / DC3000) protein is Siroheme synthase.